A 243-amino-acid chain; its full sequence is Probable transcriptional regulatory protein BDU_30 (243 aa).

It belongs to the TACO1 family.

The protein resides in the cytoplasm. The polypeptide is Probable transcriptional regulatory protein BDU_30 (Borrelia duttonii (strain Ly)).